The primary structure comprises 365 residues: TD and POZ domain-containing protein 1 (365 aa).

The region spanning 19–149 is the MATH domain; it reads KFCYKWTISN…EDQLTICCKV (131 aa). The region spanning 188 to 250 is the BTB domain; that stretch reads TDCCLLVAGH…EMMGFIYTGK (63 aa).

The protein belongs to the Tdpoz family.

This is TD and POZ domain-containing protein 1 from Mus musculus (Mouse).